The primary structure comprises 475 residues: Chromosomal replication initiator protein DnaA (475 aa).

The domain I, interacts with DnaA modulators stretch occupies residues 1 to 71; it reads MTNDTWNEVR…RQLSAHGAGA (71 aa). Residues 71-133 form a domain II region; it reads ADRVKFTVSP…PAQPRELPGA (63 aa). The segment covering 107–127 has biased composition (low complexity); it reads APAPVHHTAPAPAPVAAPAQP. The tract at residues 107–129 is disordered; it reads APAPVHHTAPAPAPVAAPAQPRE. The segment at 134–355 is domain III, AAA+ region; the sequence is KLNPNFTFAN…GALTRLFAFA (222 aa). Gly178, Gly180, Lys181, and Thr182 together coordinate ATP. The tract at residues 356–475 is domain IV, binds dsDNA; it reads DLVRREVTVD…AELLRRTLEA (120 aa).

This sequence belongs to the DnaA family. As to quaternary structure, oligomerizes as a right-handed, spiral filament on DNA at oriC.

The protein resides in the cytoplasm. Plays an essential role in the initiation and regulation of chromosomal replication. ATP-DnaA binds to the origin of replication (oriC) to initiate formation of the DNA replication initiation complex once per cell cycle. Binds the DnaA box (a 9 base pair repeat at the origin) and separates the double-stranded (ds)DNA. Forms a right-handed helical filament on oriC DNA; dsDNA binds to the exterior of the filament while single-stranded (ss)DNA is stabiized in the filament's interior. The ATP-DnaA-oriC complex binds and stabilizes one strand of the AT-rich DNA unwinding element (DUE), permitting loading of DNA polymerase. After initiation quickly degrades to an ADP-DnaA complex that is not apt for DNA replication. Binds acidic phospholipids. The sequence is that of Chromosomal replication initiator protein DnaA from Jannaschia sp. (strain CCS1).